Consider the following 58-residue polypeptide: Photosystem II reaction center protein K (58 aa).

A propeptide spanning residues 1-21 is cleaved from the precursor; that stretch reads MLAIFNIYLDNAFHLNGIILA. A helical membrane pass occupies residues 29 to 49; the sequence is IFDPIVDVMPIIPVFFFLLAF.

It belongs to the PsbK family. In terms of assembly, PSII is composed of 1 copy each of membrane proteins PsbA, PsbB, PsbC, PsbD, PsbE, PsbF, PsbH, PsbI, PsbJ, PsbK, PsbL, PsbM, PsbT, PsbX, PsbY, PsbZ, Psb30/Ycf12, at least 3 peripheral proteins of the oxygen-evolving complex and a large number of cofactors. It forms dimeric complexes.

The protein resides in the plastid. Its subcellular location is the chloroplast thylakoid membrane. One of the components of the core complex of photosystem II (PSII). PSII is a light-driven water:plastoquinone oxidoreductase that uses light energy to abstract electrons from H(2)O, generating O(2) and a proton gradient subsequently used for ATP formation. It consists of a core antenna complex that captures photons, and an electron transfer chain that converts photonic excitation into a charge separation. This chain is Photosystem II reaction center protein K, found in Physcomitrium patens (Spreading-leaved earth moss).